Here is a 481-residue protein sequence, read N- to C-terminus: Glutamyl-tRNA(Gln) amidotransferase subunit A (481 aa).

Residues lysine 76 and serine 151 each act as charge relay system in the active site. The Acyl-ester intermediate role is filled by serine 175.

The protein belongs to the amidase family. GatA subfamily. Heterotrimer of A, B and C subunits.

It carries out the reaction L-glutamyl-tRNA(Gln) + L-glutamine + ATP + H2O = L-glutaminyl-tRNA(Gln) + L-glutamate + ADP + phosphate + H(+). Allows the formation of correctly charged Gln-tRNA(Gln) through the transamidation of misacylated Glu-tRNA(Gln) in organisms which lack glutaminyl-tRNA synthetase. The reaction takes place in the presence of glutamine and ATP through an activated gamma-phospho-Glu-tRNA(Gln). The protein is Glutamyl-tRNA(Gln) amidotransferase subunit A of Chlorobaculum tepidum (strain ATCC 49652 / DSM 12025 / NBRC 103806 / TLS) (Chlorobium tepidum).